Reading from the N-terminus, the 301-residue chain is Acidic endochitinase (301 aa).

The signal sequence occupies residues 1 to 25 (MARTPQSTPLLISLSVLALLQTSYA). The 276-residue stretch at 26–301 (GGIAIYWGQN…GYSSSIKSSV (276 aa)) folds into the GH18 domain. Intrachain disulfides connect Cys45-Cys92 and Cys75-Cys82. Residue Glu152 is the Proton donor of the active site. An intrachain disulfide couples Cys187 to Cys216.

It belongs to the glycosyl hydrolase 18 family. Chitinase class II subfamily.

The enzyme catalyses Random endo-hydrolysis of N-acetyl-beta-D-glucosaminide (1-&gt;4)-beta-linkages in chitin and chitodextrins.. In terms of biological role, defense against chitin containing fungal pathogens. The polypeptide is Acidic endochitinase (CHIT3) (Vitis vinifera (Grape)).